A 519-amino-acid chain; its full sequence is Carboxyl-terminal-processing peptidase 3, chloroplastic (519 aa).

The region spanning 186-274 (YQSFRIGSDG…IKLKNVNGSG (89 aa)) is the PDZ domain. Residues Ser-407 and Lys-432 each act as charge relay system in the active site.

This sequence belongs to the peptidase S41A family.

The protein resides in the plastid. It is found in the chloroplast thylakoid lumen. It carries out the reaction The enzyme shows specific recognition of a C-terminal tripeptide, Xaa-Yaa-Zaa, in which Xaa is preferably Ala or Leu, Yaa is preferably Ala or Tyr, and Zaa is preferably Ala, but then cleaves at a variable distance from the C-terminus. A typical cleavage is -Ala-Ala-|-Arg-Ala-Ala-Lys-Glu-Asn-Tyr-Ala-Leu-Ala-Ala.. Protease involved in the C-terminal processing of the chloroplastic D1 protein of photosystem II. This proteolytic processing is necessary to allow the light-driven assembly of the tetranuclear manganese cluster, which is responsible for photosynthetic water oxidation. This chain is Carboxyl-terminal-processing peptidase 3, chloroplastic (CTPA3), found in Arabidopsis thaliana (Mouse-ear cress).